A 385-amino-acid polypeptide reads, in one-letter code: Serine/threonine-protein kinase SBK1 (385 aa).

A Protein kinase domain is found at 32–297 (YEVIRELGKG…VFAHLGHRWM (266 aa)). ATP contacts are provided by residues 38-46 (LGKGTYGKV) and Lys-61. The active-site Proton acceptor is the Asp-153. The span at 328–338 (TLSPTANTSNA) shows a compositional bias: polar residues. Positions 328–374 (TLSPTANTSNAIEPGSANHFTSMSTNSSVSSTNSYERSARDSPPTSR) are disordered. Residues 348–361 (TSMSTNSSVSSTNS) show a composition bias toward low complexity.

It belongs to the protein kinase superfamily. Ser/Thr protein kinase family. As to expression, mainly expressed in brain.

It localises to the cytoplasm. The catalysed reaction is L-seryl-[protein] + ATP = O-phospho-L-seryl-[protein] + ADP + H(+). It catalyses the reaction L-threonyl-[protein] + ATP = O-phospho-L-threonyl-[protein] + ADP + H(+). Its function is as follows. May be involved in the control of neuronal proliferation or migration in the brain of embryos. The polypeptide is Serine/threonine-protein kinase SBK1 (sbk1) (Danio rerio (Zebrafish)).